The chain runs to 338 residues: Trace amine-associated receptor 9 (338 aa).

Topologically, residues 1–23 (MELCYENVNGSCIKSSYSPWPRA) are extracellular. Asn9 carries an N-linked (GlcNAc...) asparagine glycan. Intrachain disulfides connect Cys12–Cys176 and Cys95–Cys180. A helical transmembrane segment spans residues 24-48 (ILYAVLGLGALLAVFGNLLVITAIL). Topologically, residues 49–58 (HFKQLHTPTN) are cytoplasmic. Residues 59–80 (FLVASLACADFLVGVTVMPFST) traverse the membrane as a helical segment. Residues 81–95 (VRSVEGCWYFGDTYC) are Extracellular-facing. Residues 96–118 (KFHTCFDTSFCFASLFHLCCISI) traverse the membrane as a helical segment. 2 residues coordinate spermidine: Asp102 and Thr103. The Cytoplasmic segment spans residues 119-138 (DRYVAVTDPLTYPTKFTISV). A helical transmembrane segment spans residues 139-160 (SGVCIALSWFFSVTYSFSIFYT). At 161–186 (GANEEGIEELVVALTCVGGCQAPLNQ) the chain is on the extracellular side. Positions 164 to 177 (EEGIEELVVALTCV) are extracellular Loop 2 (ECL2). Residues 187 to 208 (NWVLLCFLLFFLPTVVMVFLYG) traverse the membrane as a helical segment. At 209–246 (RIFLVAKQQARKIEGSANQPQASSESYKERVARRERKA) the chain is on the cytoplasmic side. A helical membrane pass occupies residues 247–270 (AKTLGIAMAAFLVSWLPYIIDAVI). Residues 271 to 283 (DAYMNFITPAYVY) are Extracellular-facing. Residues 284–304 (EILVWCVYYNSAMNPLIYAFF) form a helical membrane-spanning segment. The Cytoplasmic segment spans residues 305–338 (YPWFRKAIKLIVSGKVFRADSSRTNLFSEEAGAG).

Belongs to the G-protein coupled receptor 1 family. As to expression, mainly expressed in neurons of the olfactory epithelium. Also expressed in the intestine.

It localises to the cell membrane. In terms of biological role, olfactory receptor specific for trace amines, such as triethylamine, N-methylpiperidine, N,N-dimethylcyclohexylamine (DMCHA), beta-phenylethylamine (beta-PEA), cadaverine (CAD) and polyamines such as spermidine. Trace amine compounds are enriched in animal body fluids and act on trace amine-associated receptors (TAARs) to elicit both intraspecific and interspecific innate behaviors. Trace amine-binding causes a conformation change that triggers signaling via G(s)-class of G alpha proteins (GNAL or GNAS). In mature olfactory sensory neurons, Taar9 is coupled with GNAL/G(olf)G alpha protein and mediates activation of adenylate cyclase activity to activate cAMP signaling and eventually transmit odorant signals to achieve membrane depolarization. In immature olfactory sensory neurons, Taar9 is coupled with GNAS/G(s) G alpha proteins. This Rattus norvegicus (Rat) protein is Trace amine-associated receptor 9.